Here is a 44-residue protein sequence, read N- to C-terminus: Opistoporin-2 (44 aa).

In terms of tissue distribution, expressed by the venom gland.

The protein resides in the secreted. It localises to the target cell membrane. In terms of biological role, at high concentrations, acts as a pore former in cellular membranes and causes the leakage of the cells. At submicromolar concentrations, degranulates granulocytes and has a weak hemolytic activity against human erythrocytes. Also strongly inhibits the production of superoxide anions. Has a strong antibacterial activity against Gram-negative bacteria but is less active against Gram-positive bacteria. Also has antifungal activity. In Opistophthalmus carinatus (African yellow leg scorpion), this protein is Opistoporin-2.